A 345-amino-acid polypeptide reads, in one-letter code: Holliday junction branch migration complex subunit RuvB (345 aa).

The segment at Leu-3 to Tyr-187 is large ATPase domain (RuvB-L). Residues Leu-26, Arg-27, Gly-68, Lys-71, Thr-72, Thr-73, Glu-134–Phe-136, Arg-177, Tyr-187, and Arg-224 each bind ATP. Residue Thr-72 coordinates Mg(2+). The segment at Ser-188–Glu-259 is small ATPAse domain (RuvB-S). The tract at residues Ser-262–Leu-345 is head domain (RuvB-H). Positions 317 and 322 each coordinate DNA.

It belongs to the RuvB family. As to quaternary structure, homohexamer. Forms an RuvA(8)-RuvB(12)-Holliday junction (HJ) complex. HJ DNA is sandwiched between 2 RuvA tetramers; dsDNA enters through RuvA and exits via RuvB. An RuvB hexamer assembles on each DNA strand where it exits the tetramer. Each RuvB hexamer is contacted by two RuvA subunits (via domain III) on 2 adjacent RuvB subunits; this complex drives branch migration. In the full resolvosome a probable DNA-RuvA(4)-RuvB(12)-RuvC(2) complex forms which resolves the HJ.

It localises to the cytoplasm. The catalysed reaction is ATP + H2O = ADP + phosphate + H(+). The RuvA-RuvB-RuvC complex processes Holliday junction (HJ) DNA during genetic recombination and DNA repair, while the RuvA-RuvB complex plays an important role in the rescue of blocked DNA replication forks via replication fork reversal (RFR). RuvA specifically binds to HJ cruciform DNA, conferring on it an open structure. The RuvB hexamer acts as an ATP-dependent pump, pulling dsDNA into and through the RuvAB complex. RuvB forms 2 homohexamers on either side of HJ DNA bound by 1 or 2 RuvA tetramers; 4 subunits per hexamer contact DNA at a time. Coordinated motions by a converter formed by DNA-disengaged RuvB subunits stimulates ATP hydrolysis and nucleotide exchange. Immobilization of the converter enables RuvB to convert the ATP-contained energy into a lever motion, pulling 2 nucleotides of DNA out of the RuvA tetramer per ATP hydrolyzed, thus driving DNA branch migration. The RuvB motors rotate together with the DNA substrate, which together with the progressing nucleotide cycle form the mechanistic basis for DNA recombination by continuous HJ branch migration. Branch migration allows RuvC to scan DNA until it finds its consensus sequence, where it cleaves and resolves cruciform DNA. The polypeptide is Holliday junction branch migration complex subunit RuvB (Tropheryma whipplei (strain TW08/27) (Whipple's bacillus)).